The primary structure comprises 236 residues: 7-cyano-7-deazaguanine synthase (236 aa).

ATP is bound at residue 7 to 17 (CSGGLDSVSLA). Residues cysteine 185, cysteine 193, cysteine 196, and cysteine 199 each coordinate Zn(2+).

This sequence belongs to the QueC family. Zn(2+) is required as a cofactor.

It catalyses the reaction 7-carboxy-7-deazaguanine + NH4(+) + ATP = 7-cyano-7-deazaguanine + ADP + phosphate + H2O + H(+). It functions in the pathway purine metabolism; 7-cyano-7-deazaguanine biosynthesis. In terms of biological role, catalyzes the ATP-dependent conversion of 7-carboxy-7-deazaguanine (CDG) to 7-cyano-7-deazaguanine (preQ(0)). This Rhizobium etli (strain ATCC 51251 / DSM 11541 / JCM 21823 / NBRC 15573 / CFN 42) protein is 7-cyano-7-deazaguanine synthase.